Here is a 764-residue protein sequence, read N- to C-terminus: MQQSAQLITENKEFNEDFPRFLKDVGLDNVGFDYHVVAVLGSQSTGKSTLLNKLFGTQFSTMDTVRRQQTTKGIWVSRGKDSSILIMDVEGTDGRERGDDQDFERKSALFSIATSEVIIVNMWENQIGLYQGSNMTLLKTVFEVNLQLFHENIERSRLQFVIRDFLGSTSLDNLSETLMTDLNRTWASISKPEGLENSVITDFFDVDFSALPHKVLCAEAFDEETDKLREQFLDEKNPKYLFKPCYHKRIPADGFPLYTQGIWQLIQNNRDLDLPTQQQLLAQYRCDEFIAEAMVSFDEQCEELLTFLKTHQSIENLLQRLEAIQTSTFSIFDENARRYQSEVYTKKRQELDRMMKTRLAVPIQRYLAAIHKELVAGFPERIATLVKDACFKDVARVTVSEMVSVMHSEAAALQKEGFVCDAEQTVETLRVELLQLVRSMREERLAQISAKLMVQFEQEFADAIDVSFHHLTKDIWDNIMHKFDELREKVLDEMLRSLNEYIDDEMDEDAELLRTKHMFKLKRSTWLVLRRTLENETAEPILQQRLRTHFEDSFRYDSRGIPKMWKKSDILENDFNKSLQDTLQLIDVLAIVRLKDGSVPTVDVPLAEEGEDTASNLEADTFFTFLNRKKKANIHVSVKRAADLVFLDCKRSIISTATRVPGYFWALLAVLGWNEFVSVLKNPVLLTLLLIVVSFLFILVQTGLAGPVKAFAERSVRNAVNSMGEKLAEKLDDYRSTSPASETTSGRVISAENSSVDEKVSTTP.

The Cytoplasmic portion of the chain corresponds to 1–659 (MQQSAQLITE…KRSIISTATR (659 aa)). Residues 31-246 (GFDYHVVAVL…NPKYLFKPCY (216 aa)) form the GB1/RHD3-type G domain. Position 41-48 (41-48 (GSQSTGKS)) interacts with GTP. 2 coiled-coil regions span residues 302–322 (EELL…QRLE) and 421–443 (DAEQ…MREE). A helical transmembrane segment spans residues 660-680 (VPGYFWALLAVLGWNEFVSVL). The Lumenal segment spans residues 681 to 683 (KNP). The helical transmembrane segment at 684–704 (VLLTLLLIVVSFLFILVQTGL) threads the bilayer. The Cytoplasmic segment spans residues 705 to 764 (AGPVKAFAERSVRNAVNSMGEKLAEKLDDYRSTSPASETTSGRVISAENSSVDEKVSTTP). The disordered stretch occupies residues 731 to 764 (LDDYRSTSPASETTSGRVISAENSSVDEKVSTTP). Residues 736-754 (STSPASETTSGRVISAENS) show a composition bias toward polar residues.

It belongs to the TRAFAC class dynamin-like GTPase superfamily. GB1/RHD3 GTPase family. RHD3 subfamily.

The protein localises to the endoplasmic reticulum membrane. Cooperates with the reticulon proteins and tubule-shaping DP1 family proteins to generate and maintain the structure of the tubular endoplasmic reticulum network. Has GTPase activity, which is required for its function in ER organization. The sequence is that of Protein sey1 (sey1) from Schizosaccharomyces japonicus (strain yFS275 / FY16936) (Fission yeast).